The chain runs to 609 residues: Ovochymase-2 (609 aa).

An N-terminal signal peptide occupies residues 1-22; that stretch reads MPISKDKLILILGMVCLEQGHS. The propeptide at 23–51 is activation peptide; it reads ETLSSIRNPDCGQSLVKPQPQNYFSLFSR. The Peptidase S1 domain maps to 52 to 299; the sequence is IVGGSQVEKG…VLPWILKHIQ (248 aa). Cysteines 77 and 93 form a disulfide. The active-site Charge relay system is the histidine 92. An N-linked (GlcNAc...) asparagine glycan is attached at asparagine 104. Glutamate 119 provides a ligand contact to Ca(2+). Catalysis depends on aspartate 142, which acts as the Charge relay system. 4 disulfides stabilise this stretch: cysteine 176–cysteine 246, cysteine 207–cysteine 225, cysteine 236–cysteine 265, and cysteine 311–cysteine 341. Catalysis depends on serine 240, which acts as the Charge relay system. CUB domains follow at residues 311–421 and 431–543; these read CSEP…YKAL and CRSL…ISFI. Residue asparagine 356 is glycosylated (N-linked (GlcNAc...) asparagine). A disulfide bridge connects residues cysteine 365 and cysteine 384. The N-linked (GlcNAc...) asparagine glycan is linked to asparagine 415. Cystine bridges form between cysteine 431–cysteine 458 and cysteine 485–cysteine 506. Asparagine 530 and asparagine 549 each carry an N-linked (GlcNAc...) asparagine glycan. The segment at 580–609 is disordered; that stretch reads HTKPPYEEDIGEMPAIDSGLLKQGERRGKH.

It belongs to the peptidase S1 family. As to expression, only expressed in uterus tissue. Expressed in the initial segment (IS) of the caput epididymis, the region most proximal to the testis.

It is found in the secreted. Functionally, may be required for sperm ADAM3 processing and consequential sperm fertilizing ability. In vitro, has an endopeptidase activity. This is Ovochymase-2 from Mus musculus (Mouse).